The sequence spans 177 residues: Probable chemoreceptor glutamine deamidase CheD (177 aa).

This sequence belongs to the CheD family.

The catalysed reaction is L-glutaminyl-[protein] + H2O = L-glutamyl-[protein] + NH4(+). In terms of biological role, probably deamidates glutamine residues to glutamate on methyl-accepting chemotaxis receptors (MCPs), playing an important role in chemotaxis. In Pseudomonas syringae pv. syringae (strain B728a), this protein is Probable chemoreceptor glutamine deamidase CheD.